The primary structure comprises 906 residues: Protein translocase subunit SecA (906 aa).

ATP is bound by residues Gln87, 105 to 109, and Asp507; that span reads GEGKT. The span at 553–563 shows a compositional bias: basic and acidic residues; that stretch reads RHESRRIDNQL. Disordered regions lie at residues 553-576 and 854-906; these read RHES…PGSS and LEEP…GRLA. Zn(2+)-binding residues include Cys890, Cys892, Cys901, and His902. Basic residues predominate over residues 896–906; that stretch reads KKYKQCHGRLA.

It belongs to the SecA family. Monomer and homodimer. Part of the essential Sec protein translocation apparatus which comprises SecA, SecYEG and auxiliary proteins SecDF-YajC and YidC. Zn(2+) is required as a cofactor.

The protein localises to the cell inner membrane. Its subcellular location is the cytoplasm. The enzyme catalyses ATP + H2O + cellular proteinSide 1 = ADP + phosphate + cellular proteinSide 2.. Part of the Sec protein translocase complex. Interacts with the SecYEG preprotein conducting channel. Has a central role in coupling the hydrolysis of ATP to the transfer of proteins into and across the cell membrane, serving both as a receptor for the preprotein-SecB complex and as an ATP-driven molecular motor driving the stepwise translocation of polypeptide chains across the membrane. The polypeptide is Protein translocase subunit SecA (Methylococcus capsulatus (strain ATCC 33009 / NCIMB 11132 / Bath)).